A 616-amino-acid polypeptide reads, in one-letter code: Zinc metalloproteinase-disintegrin-like protein H3 (616 aa).

Residues 1–20 form the signal peptide; that stretch reads MIQVLLVIICLAVFPYQGSS. Residues 21-193 constitute a propeptide that is removed on maturation; that stretch reads IILESGNVND…KKASQLNLTP (173 aa). Glu-194 is subject to Pyrrolidone carboxylic acid (Glu). One can recognise a Peptidase M12B domain in the interval 203-399; sequence KYIKLVIVAD…KMPQCILNKP (197 aa). Cystine bridges form between Cys-314/Cys-394, Cys-354/Cys-378, and Cys-356/Cys-361. His-339 provides a ligand contact to Zn(2+). Positions 339-350 match the Metal-binding motif; that stretch reads HEMGHNLGMDHD. The active-site Proton acceptor is Glu-340. Zn(2+) contacts are provided by His-343 and His-349. N-linked (GlcNAc...) asparagine glycosylation occurs at Asn-377. A Disintegrin domain is found at 407–493; the sequence is PAVCGNYLVE…ECPTDQFQRN (87 aa). Residues Val-409, Asn-412, Glu-416, Glu-419, and Asp-422 each contribute to the Ca(2+) site. Disulfide bonds link Cys-410–Cys-439, Cys-421–Cys-434, Cys-423–Cys-429, Cys-433–Cys-456, Cys-447–Cys-453, Cys-452–Cys-478, Cys-465–Cys-485, Cys-472–Cys-504, Cys-497–Cys-509, Cys-516–Cys-566, Cys-531–Cys-577, Cys-544–Cys-554, Cys-561–Cys-603, and Cys-597–Cys-609. The short motif at 471-473 is the D/ECD-tripeptide element; the sequence is ECD. Residues Asp-473, Asp-476, and Asp-488 each contribute to the Ca(2+) site. Asn-506 is a glycosylation site (N-linked (GlcNAc...) asparagine).

It belongs to the venom metalloproteinase (M12B) family. P-III subfamily. P-IIIc sub-subfamily. In terms of assembly, homodimer; disulfide-linked. It depends on Zn(2+) as a cofactor. N-glycosylated. In terms of processing, the N-terminus is blocked. In terms of tissue distribution, expressed by the venom gland (at protein level). Expressed by the venom gland.

It localises to the secreted. Its activity is regulated as follows. The proteolytic activity requires Zn(2+) and Ca(2+) ions. The alpha-fibrinogenase activity is completely inhibited by EDTA, but not by PMSF. Its function is as follows. Zinc metalloprotease that has fibrinogenolytic and hemorrhagic activities. Cleaves insulin B chain readily at '38-Ala-|-Leu-39' bond, and at a significantly slower rate, at '40-Tyr-|-Leu-41' bond. Hydrolyzes isolated extracellular matrix (ECM) bovine fibronectin, and basal membrane (BM) proteins human collagen IV and, to a lesser extent, murine laminin, in vitro. Cleaves murine nidogen (at '350-Ser-|-Phe-351' and '380-Tyr-|-Asn-381' bonds), but not laminin, in a solubilized BM preparation. Hydrolyzes plasma proteins involved in blood coagulation in vitro. It significantly prolongs thrombin time. Has potent alpha-fibrinogenase activity cleaving human fibrinogen alpha chain at '432-Lys-|-Leu-433' bond, but does not cleave beta or gamma chains. Hydrolyzes bovine prothrombin, but does not cleave it at '366-Arg-|-Ile-367' bond, which is necessary for the formation of active alpha-thrombin, however, the cleavage of fragment 1 from it leads to reduced alpha-thrombin formation. Hydrolyzes bovine factor X heavy chain at '211-Ser-|-Leu-212', '213-Asp-|-Leu-214' and '216-Gly-|-Leu-217' bonds activating it only marginally as does not cleave at the physiological activation site. Does not cleave factor X light chain. No hydrolysis or activation of plasminogen. The alpha-fibrinogenase activity likely contributes to its hemorrhagic activity, which in rat can be completely neutralized in vivo by anti-ammodytagin antibodies, which strongly cross-react with this protein. Has very weak collagen-, ADP- and ristocetin-induced platelet aggregation inhibition activity in vitro. The chain is Zinc metalloproteinase-disintegrin-like protein H3 from Vipera ammodytes ammodytes (Western sand viper).